Here is a 399-residue protein sequence, read N- to C-terminus: Methylthioribose kinase (399 aa).

ATP-binding positions include Asn-40, Lys-57, and 111 to 113 (EDL). Asp-229 provides a ligand contact to substrate. 246-248 (DAE) lines the ATP pocket. Substrate is bound at residue Arg-344.

The protein belongs to the methylthioribose kinase family. As to quaternary structure, homodimer.

The enzyme catalyses 5-(methylsulfanyl)-D-ribose + ATP = 5-(methylsulfanyl)-alpha-D-ribose 1-phosphate + ADP + H(+). Its pathway is amino-acid biosynthesis; L-methionine biosynthesis via salvage pathway; S-methyl-5-thio-alpha-D-ribose 1-phosphate from S-methyl-5'-thioadenosine (hydrolase route): step 2/2. Its function is as follows. Catalyzes the phosphorylation of methylthioribose into methylthioribose-1-phosphate. In Enterobacter sp. (strain 638), this protein is Methylthioribose kinase.